Here is a 133-residue protein sequence, read N- to C-terminus: ATP synthase epsilon chain, chloroplastic (133 aa).

It belongs to the ATPase epsilon chain family. As to quaternary structure, F-type ATPases have 2 components, CF(1) - the catalytic core - and CF(0) - the membrane proton channel. CF(1) has five subunits: alpha(3), beta(3), gamma(1), delta(1), epsilon(1). CF(0) has three main subunits: a, b and c.

Its subcellular location is the plastid. The protein resides in the chloroplast thylakoid membrane. Its function is as follows. Produces ATP from ADP in the presence of a proton gradient across the membrane. The polypeptide is ATP synthase epsilon chain, chloroplastic (Nicotiana sylvestris (Wood tobacco)).